Here is a 424-residue protein sequence, read N- to C-terminus: Protein UL117 (424 aa).

A disordered region spans residues 57–82; that stretch reads IVPTTSSSLAPPRDDERRPTPPLRPP.

The protein belongs to the herpesviridae U84 family.

The protein resides in the host nucleus. Functionally, plays a role in the inhibition of host DNA replication in the infected cell. Targets the mini-chromosome maintenance (MCM) complex and blocks the accumulation of MCM proteins and their loading onto host chromatin. This chain is Protein UL117 (UL117), found in Human cytomegalovirus (strain AD169) (HHV-5).